A 511-amino-acid polypeptide reads, in one-letter code: MVKQIMIQGTASDAGKSVLVAGLCRLFKNKGKQVVPFKSQNMSLNSFITVTGDEMGRAQVFQAEAAGVFPDVRMNPVLLKPTNDRQSQVIFMGAILDNMDAVTYHDFKQTLIPKIQAVYQSLADENDIIVLEGAGSPAEINLNDRDIVNMGMAKMVDAPVVLVADIDKGGVFASIYGTIMLLNEEERARIKGVIINKFRGDVALLQPGIDMIEELTNVPVIGVIPYANLQLEEEDSVSLSGKNYAPDSNALLDIAIICLPRISNFTDFHSLEIQPEISLRYIRNLADFGKPDLVIIPGSKNTLEDMAFLEESGLKKAIQNFAENAGKVIGICGGYQMLGQKMLDPNQVESRQLEIAGLGLLDTETIFLEQKRTTQITGVTHSGEAVEGYEIHMGETKRGESTSPFCKIKAVNGNEETHQDGAISANKNIIGTYIHGIFDNDVFLGNLFDELLTRKNQSIYPHEIINLKEHKEQEYDKLAALLEANIQMDQLEKIMKGEKICVSTQKPAIKE.

The region spanning 251–443 (LLDIAIICLP…IHGIFDNDVF (193 aa)) is the GATase cobBQ-type domain. The active-site Nucleophile is the cysteine 332. Histidine 435 is a catalytic residue.

Belongs to the CobB/CobQ family. CobQ subfamily.

Its pathway is cofactor biosynthesis; adenosylcobalamin biosynthesis. Its function is as follows. Catalyzes amidations at positions B, D, E, and G on adenosylcobyrinic A,C-diamide. NH(2) groups are provided by glutamine, and one molecule of ATP is hydrogenolyzed for each amidation. This Listeria monocytogenes serotype 4a (strain HCC23) protein is Cobyric acid synthase.